The chain runs to 239 residues: Endonuclease V (239 aa).

Asp50 and Asp118 together coordinate Mg(2+).

It belongs to the endonuclease V family. It depends on Mg(2+) as a cofactor.

The protein localises to the cytoplasm. It catalyses the reaction Endonucleolytic cleavage at apurinic or apyrimidinic sites to products with a 5'-phosphate.. Its function is as follows. DNA repair enzyme involved in the repair of deaminated bases. Selectively cleaves double-stranded DNA at the second phosphodiester bond 3' to a deoxyinosine leaving behind the intact lesion on the nicked DNA. The polypeptide is Endonuclease V (Xylella fastidiosa (strain 9a5c)).